The primary structure comprises 170 residues: NADH-quinone oxidoreductase subunit B (170 aa).

[4Fe-4S] cluster contacts are provided by Cys37, Cys38, Cys102, and Cys131.

It belongs to the complex I 20 kDa subunit family. As to quaternary structure, NDH-1 is composed of 14 different subunits. Subunits NuoB, C, D, E, F, and G constitute the peripheral sector of the complex. It depends on [4Fe-4S] cluster as a cofactor.

It is found in the cell inner membrane. It carries out the reaction a quinone + NADH + 5 H(+)(in) = a quinol + NAD(+) + 4 H(+)(out). Its function is as follows. NDH-1 shuttles electrons from NADH, via FMN and iron-sulfur (Fe-S) centers, to quinones in the respiratory chain. The immediate electron acceptor for the enzyme in this species is believed to be ubiquinone. Couples the redox reaction to proton translocation (for every two electrons transferred, four hydrogen ions are translocated across the cytoplasmic membrane), and thus conserves the redox energy in a proton gradient. The sequence is that of NADH-quinone oxidoreductase subunit B from Geobacter metallireducens (strain ATCC 53774 / DSM 7210 / GS-15).